Here is a 485-residue protein sequence, read N- to C-terminus: Adenosylhomocysteinase (485 aa).

Substrate is bound by residues threonine 64, aspartate 139, and glutamate 205. 206 to 208 (TTT) contacts NAD(+). Residues lysine 235 and aspartate 239 each contribute to the substrate site. NAD(+)-binding positions include asparagine 240, 269–274 (GYGDVG), glutamate 292, asparagine 327, and 348–350 (IGH).

Belongs to the adenosylhomocysteinase family. Homotetramer. NAD(+) serves as cofactor.

The enzyme catalyses S-adenosyl-L-homocysteine + H2O = L-homocysteine + adenosine. It functions in the pathway amino-acid biosynthesis; L-homocysteine biosynthesis; L-homocysteine from S-adenosyl-L-homocysteine: step 1/1. Functionally, adenosylhomocysteine is a competitive inhibitor of S-adenosyl-L-methionine-dependent methyl transferase reactions; therefore adenosylhomocysteinase may play a key role in the control of methylations via regulation of the intracellular concentration of adenosylhomocysteine. This chain is Adenosylhomocysteinase (SAHH), found in Mesembryanthemum crystallinum (Common ice plant).